The sequence spans 438 residues: GDP-mannose 6-dehydrogenase (438 aa).

Positions 10, 11, 30, 35, 86, and 124 each coordinate NAD(+). GDP-alpha-D-mannuronate contacts are provided by glutamate 161, lysine 210, asparagine 214, histidine 217, asparagine 225, tyrosine 256, tyrosine 257, arginine 259, phenylalanine 262, and glycine 265. The active site involves cysteine 268. Lysine 271 serves as a coordination point for NAD(+). Residue lysine 324 coordinates GDP-alpha-D-mannuronate. Residue arginine 331 coordinates NAD(+).

The protein belongs to the UDP-glucose/GDP-mannose dehydrogenase family.

The enzyme catalyses GDP-alpha-D-mannose + 2 NAD(+) + H2O = GDP-alpha-D-mannuronate + 2 NADH + 3 H(+). It functions in the pathway glycan biosynthesis; alginate biosynthesis. In terms of biological role, catalyzes the oxidation of guanosine diphospho-D-mannose (GDP-D-mannose) to GDP-D-mannuronic acid, a precursor for alginate polymerization. The alginate layer causes a mucoid phenotype and provides a protective barrier against host immune defenses and antibiotics. This Pseudomonas savastanoi pv. phaseolicola (Pseudomonas syringae pv. phaseolicola) protein is GDP-mannose 6-dehydrogenase (algD).